The sequence spans 464 residues: DNA primase DnaG (464 aa).

Residues 200–274 enclose the Toprim domain; the sequence is DSIIVVEGRA…DVDYVARAPE (75 aa). Positions 206, 248, and 250 each coordinate Mg(2+). Over residues 322–332 the composition is skewed to basic and acidic residues; sequence NGREEKVREVK. The segment at 322-359 is disordered; the sequence is NGREEKVREVKPPAPAPAPAPAPKPIEKPEPKEREEKI. Residues 333–345 show a composition bias toward pro residues; sequence PPAPAPAPAPAPK. Residues 346–359 show a composition bias toward basic and acidic residues; the sequence is PIEKPEPKEREEKI.

Belongs to the archaeal DnaG primase family. Forms a ternary complex with MCM helicase and DNA. Component of the archaeal exosome complex. Requires Mg(2+) as cofactor.

The catalysed reaction is ssDNA + n NTP = ssDNA/pppN(pN)n-1 hybrid + (n-1) diphosphate.. Functionally, RNA polymerase that catalyzes the synthesis of short RNA molecules used as primers for DNA polymerase during DNA replication. Also part of the exosome, which is a complex involved in RNA degradation. Acts as a poly(A)-binding protein that enhances the interaction between heteromeric, adenine-rich transcripts and the exosome. The sequence is that of DNA primase DnaG from Thermococcus onnurineus (strain NA1).